Consider the following 323-residue polypeptide: Fructose-1,6-bisphosphatase class 1 (323 aa).

Residues E88, D107, L109, and D110 each coordinate Mg(2+). Substrate contacts are provided by residues 110 to 113 (DGSS) and N200. E272 contributes to the Mg(2+) binding site.

It belongs to the FBPase class 1 family. As to quaternary structure, homotetramer. The cofactor is Mg(2+).

The protein localises to the cytoplasm. The catalysed reaction is beta-D-fructose 1,6-bisphosphate + H2O = beta-D-fructose 6-phosphate + phosphate. The protein operates within carbohydrate biosynthesis; gluconeogenesis. The chain is Fructose-1,6-bisphosphatase class 1 from Acinetobacter baumannii (strain ACICU).